Here is a 338-residue protein sequence, read N- to C-terminus: Glycerol-3-phosphate dehydrogenase [NAD(P)+] (338 aa).

NADPH contacts are provided by S14, Y15, H35, and K109. Residues K109, G138, and T140 each contribute to the sn-glycerol 3-phosphate site. Residue A142 participates in NADPH binding. Residues K194, D247, S257, R258, and N259 each coordinate sn-glycerol 3-phosphate. K194 serves as the catalytic Proton acceptor. An NADPH-binding site is contributed by R258. The NADPH site is built by V282 and E284.

This sequence belongs to the NAD-dependent glycerol-3-phosphate dehydrogenase family.

The protein localises to the cytoplasm. The catalysed reaction is sn-glycerol 3-phosphate + NAD(+) = dihydroxyacetone phosphate + NADH + H(+). It carries out the reaction sn-glycerol 3-phosphate + NADP(+) = dihydroxyacetone phosphate + NADPH + H(+). The protein operates within membrane lipid metabolism; glycerophospholipid metabolism. Functionally, catalyzes the reduction of the glycolytic intermediate dihydroxyacetone phosphate (DHAP) to sn-glycerol 3-phosphate (G3P), the key precursor for phospholipid synthesis. The sequence is that of Glycerol-3-phosphate dehydrogenase [NAD(P)+] from Shewanella putrefaciens (strain CN-32 / ATCC BAA-453).